Consider the following 119-residue polypeptide: Ribonuclease P protein component (119 aa).

This sequence belongs to the RnpA family. Consists of a catalytic RNA component (M1 or rnpB) and a protein subunit.

The enzyme catalyses Endonucleolytic cleavage of RNA, removing 5'-extranucleotides from tRNA precursor.. Its function is as follows. RNaseP catalyzes the removal of the 5'-leader sequence from pre-tRNA to produce the mature 5'-terminus. It can also cleave other RNA substrates such as 4.5S RNA. The protein component plays an auxiliary but essential role in vivo by binding to the 5'-leader sequence and broadening the substrate specificity of the ribozyme. In Mycolicibacterium paratuberculosis (strain ATCC BAA-968 / K-10) (Mycobacterium paratuberculosis), this protein is Ribonuclease P protein component.